The sequence spans 368 residues: DNA replication and repair protein RecF (368 aa).

30 to 37 lines the ATP pocket; it reads GNNAQGKT.

The protein belongs to the RecF family.

It is found in the cytoplasm. Its function is as follows. The RecF protein is involved in DNA metabolism; it is required for DNA replication and normal SOS inducibility. RecF binds preferentially to single-stranded, linear DNA. It also seems to bind ATP. This Streptococcus pyogenes serotype M6 (strain ATCC BAA-946 / MGAS10394) protein is DNA replication and repair protein RecF.